The primary structure comprises 232 residues: Probable GTP-binding protein EngB (232 aa).

In terms of domain architecture, EngB-type G spans 13 to 188 (IGLEVAFAGR…AGVMGNWYEY (176 aa)). Residues 21–28 (GRSNAGKS), 48–52 (GRTQM), 67–70 (DLPG), 134–137 (TKAD), and 167–169 (FSA) each bind GTP. Ser28 and Thr50 together coordinate Mg(2+).

It belongs to the TRAFAC class TrmE-Era-EngA-EngB-Septin-like GTPase superfamily. EngB GTPase family. It depends on Mg(2+) as a cofactor.

Functionally, necessary for normal cell division and for the maintenance of normal septation. The protein is Probable GTP-binding protein EngB of Psychrobacter arcticus (strain DSM 17307 / VKM B-2377 / 273-4).